A 320-amino-acid chain; its full sequence is o-succinylbenzoate synthase (320 aa).

The Proton donor role is filled by Lys133. Asp161, Glu190, and Asp213 together coordinate Mg(2+). The active-site Proton acceptor is the Lys235.

This sequence belongs to the mandelate racemase/muconate lactonizing enzyme family. MenC type 1 subfamily. A divalent metal cation serves as cofactor.

The enzyme catalyses (1R,6R)-6-hydroxy-2-succinyl-cyclohexa-2,4-diene-1-carboxylate = 2-succinylbenzoate + H2O. It functions in the pathway quinol/quinone metabolism; 1,4-dihydroxy-2-naphthoate biosynthesis; 1,4-dihydroxy-2-naphthoate from chorismate: step 4/7. Its pathway is quinol/quinone metabolism; menaquinone biosynthesis. In terms of biological role, converts 2-succinyl-6-hydroxy-2,4-cyclohexadiene-1-carboxylate (SHCHC) to 2-succinylbenzoate (OSB). This chain is o-succinylbenzoate synthase, found in Escherichia coli O6:H1 (strain CFT073 / ATCC 700928 / UPEC).